We begin with the raw amino-acid sequence, 592 residues long: Putative uric acid sigma-54-dependent transcriptional regulator UacR (592 aa).

The region spanning 158-229 is the PAS domain; sequence ISKIFATMID…HMQHIVSWDD (72 aa). The region spanning 272 to 502 is the Sigma-54 factor interaction domain; the sequence is LVGECRVMRQ…LSNLMEYLVN (231 aa). Residues 300-307 and 364-373 each bind ATP; these read GESGTGKE and ANTGTLFLDE. The H-T-H motif DNA-binding region spans 567–585; that stretch reads KQVADELGIGIATLYRKIK.

Its function is as follows. Essential for both formate-dependent and formate-independent uric acid degradation. May be directly involved in the transcription of uacF in response to hypoxanthine, xanthine, and uric acid. The sequence is that of Putative uric acid sigma-54-dependent transcriptional regulator UacR from Escherichia coli (strain K12).